A 221-amino-acid chain; its full sequence is Thiamine-phosphate synthase (221 aa).

Residues 44 to 48 and Asn-80 each bind 4-amino-2-methyl-5-(diphosphooxymethyl)pyrimidine; that span reads QLRLK. Residues Asp-81 and Asp-100 each contribute to the Mg(2+) site. A 4-amino-2-methyl-5-(diphosphooxymethyl)pyrimidine-binding site is contributed by Thr-119. Residue 146 to 148 participates in 2-[(2R,5Z)-2-carboxy-4-methylthiazol-5(2H)-ylidene]ethyl phosphate binding; it reads TTT. Lys-149 lines the 4-amino-2-methyl-5-(diphosphooxymethyl)pyrimidine pocket. Residue Gly-176 coordinates 2-[(2R,5Z)-2-carboxy-4-methylthiazol-5(2H)-ylidene]ethyl phosphate.

Belongs to the thiamine-phosphate synthase family. It depends on Mg(2+) as a cofactor.

It catalyses the reaction 2-[(2R,5Z)-2-carboxy-4-methylthiazol-5(2H)-ylidene]ethyl phosphate + 4-amino-2-methyl-5-(diphosphooxymethyl)pyrimidine + 2 H(+) = thiamine phosphate + CO2 + diphosphate. The catalysed reaction is 2-(2-carboxy-4-methylthiazol-5-yl)ethyl phosphate + 4-amino-2-methyl-5-(diphosphooxymethyl)pyrimidine + 2 H(+) = thiamine phosphate + CO2 + diphosphate. It carries out the reaction 4-methyl-5-(2-phosphooxyethyl)-thiazole + 4-amino-2-methyl-5-(diphosphooxymethyl)pyrimidine + H(+) = thiamine phosphate + diphosphate. It participates in cofactor biosynthesis; thiamine diphosphate biosynthesis; thiamine phosphate from 4-amino-2-methyl-5-diphosphomethylpyrimidine and 4-methyl-5-(2-phosphoethyl)-thiazole: step 1/1. Functionally, condenses 4-methyl-5-(beta-hydroxyethyl)thiazole monophosphate (THZ-P) and 2-methyl-4-amino-5-hydroxymethyl pyrimidine pyrophosphate (HMP-PP) to form thiamine monophosphate (TMP). This Hyphomonas neptunium (strain ATCC 15444) protein is Thiamine-phosphate synthase.